The primary structure comprises 873 residues: MKSSAELRKIFLDYFRHQSHEIVPSGPLVPANDPTLLFTNAGMVQFKEVFLGREVRAYHRAASAQRCVRAGGKHNDLENVGYTARHHTFFEMLGNFSFGDYFKREAIGYAWELLTEVLKLPPERLWVTVFKEDDEAANIWLQEIGVSPERFSRCGAEDNFWSMGETGPCGPCSEIFYDHGPEIEGGPPGSPEQEGDRYTEIWNLVFMQYDRGKEGRLSPLPRPSVDTGMGLERLAAVMQGVHDNYNIDLFRNLIAAITALSGIQNQEQTSLRVIADHIRSCVFLIVDGIQPSNEGRGYVLRRIIRRAIRHGHKLGLRDPFFYRLVEPLVQEMGEAYPELFRLQSQVERVLKLEEERFNETLEQGLKILEQDIIDLSDAVIPGETIFRLYDTFGFPVDLTADIARERKLTLDMKGFEQAMAKQRKRARAASRFKIEYGSELQMDLETEFTGYEQLRGEGQIAALFRLAETMETVEQLSAGESGMVVLDRTPFYAEAGGQVGDRGTLRGSNGLFNVTDTHKQGAAHVHLGEVRLGQLRVGDSIQSEVDRKYRTPTRLNHSATHLLHAALREVLGEGVIQKGSLVASDRLRFDFSHLEAVQSGQLRQIEHLVNAKIRANLPVETQIMPLQQALDAGVMALFGEKYGEQVRVLRMGDFSMELCGGTHVDRTGDIGLFKIINEMGVAAGIRRIEAVTGEAALSWVEEGEVCLEALMGRLKASRNSAVDKLEQLQQQTRQQEKELQRLKAKLATTGGADLSIQAQEIRGIKVLAARIDGVDSKTLRATVDQLKGKLITAAVVLGTVVEDKVVLIAGVTNNATSRIKAGDLVNFVAEQVGGRGGGRPDMAQAGGRNPDKLDAALDLVPKWVEGQLTSGAQ.

Zn(2+) contacts are provided by His557, His561, Cys659, and His663.

Belongs to the class-II aminoacyl-tRNA synthetase family. It depends on Zn(2+) as a cofactor.

It localises to the cytoplasm. It carries out the reaction tRNA(Ala) + L-alanine + ATP = L-alanyl-tRNA(Ala) + AMP + diphosphate. Catalyzes the attachment of alanine to tRNA(Ala) in a two-step reaction: alanine is first activated by ATP to form Ala-AMP and then transferred to the acceptor end of tRNA(Ala). Also edits incorrectly charged Ser-tRNA(Ala) and Gly-tRNA(Ala) via its editing domain. The chain is Alanine--tRNA ligase from Nitrosococcus oceani (strain ATCC 19707 / BCRC 17464 / JCM 30415 / NCIMB 11848 / C-107).